We begin with the raw amino-acid sequence, 452 residues long: Cell division protein FtsZ (452 aa).

GTP is bound by residues 24 to 28, 111 to 113, Glu142, Arg146, and Asp190; these read GAGSN and GTG.

This sequence belongs to the FtsZ family. Homodimer. Polymerizes to form a dynamic ring structure in a strictly GTP-dependent manner. Interacts directly with several other division proteins.

The protein localises to the cytoplasm. Functionally, essential cell division protein that forms a contractile ring structure (Z ring) at the future cell division site. The regulation of the ring assembly controls the timing and the location of cell division. One of the functions of the FtsZ ring is to recruit other cell division proteins to the septum to produce a new cell wall between the dividing cells. Binds GTP and shows GTPase activity. In Rickettsia typhi (strain ATCC VR-144 / Wilmington), this protein is Cell division protein FtsZ.